A 249-amino-acid chain; its full sequence is MEMGRRIHLELRNRTPSDVKELVLDNSRSNEGKLEGLTDEFEELEFLSTINVGLTSIANLPKLNKLKKLELSDNRVSGGLEVLAEKCPNLTHLNLSGNKIKDLSTIEPLKKLENLKSLDLFNCEVTNLNDYRENVFKLLPQLTYLDGYDRDDKEAPDSDAEGYVEGLDDEEEDEDEEEYDEDAQVVEDEEDEDEEEEGEEEDVSGEEEEDEEGYNDGEVDDEEDEEELGEEERGQKRKREPEDEGEDDD.

Phosphothreonine is present on threonine 15. Serine 17 carries the post-translational modification Phosphoserine. 4 LRR repeats span residues 18–38, 43–64, 65–87, and 89–110; these read DVKELVLDNSRSNEGKLEGLT, ELEFLSTINVGLTSIANLPKLN, KLKKLELSDNRVSGGLEVLAEKC, and NLTHLNLSGNKIKDLSTIEPLK. The 39-residue stretch at 123-161 folds into the LRRCT domain; the sequence is CEVTNLNDYRENVFKLLPQLTYLDGYDRDDKEAPDSDAE. Basic and acidic residues predominate over residues 147-156; sequence GYDRDDKEAP. Positions 147–249 are disordered; the sequence is GYDRDDKEAP…EPEDEGEDDD (103 aa). Residues 150 to 174 are necessary for tumor-suppressive function; sequence RDDKEAPDSDAEGYVEGLDDEEEDE. Acidic residues predominate over residues 157–230; it reads DSDAEGYVEG…DEEDEEELGE (74 aa). A phosphoserine; by CK2 mark is found at serine 158 and serine 204. The tract at residues 165–249 is interaction with E4F1; that stretch reads EGLDDEEEDE…EPEDEGEDDD (85 aa).

Belongs to the ANP32 family. In terms of assembly, component of the SET complex, composed of at least ANP32A, APEX1, HMGB2, NME1, SET and TREX1. Directly interacts with SET. Interacts with ATXN1/SCA1. Interacts with MAP1B. Interacts with ELAVL1. Part of the INHAT (inhibitor of histone acetyltransferases) complex. Interacts with E4F1. As to quaternary structure, (Microbial infection) Interacts (via C-terminus) with influenza virus A protein PB2; this interaction promotes viral replication. (Microbial infection) Interacts (via C-terminus) with influenza virus B protein PB2; this interaction promotes viral replication. In terms of assembly, (Microbial infection) Interacts (via C-terminus) with influenza virus C protein PB2; this interaction promotes viral replication by bridging viral replicase dimers together. Phosphorylated on serine residues, at least in part by casein kinase 2/CK2. Post-translationally, the N-terminus is blocked. In terms of processing, some glutamate residues are glycylated by TTLL8. This modification occurs exclusively on glutamate residues and results in a glycine chain on the gamma-carboxyl group. Expressed in all tissues tested. Highly expressed in kidney and skeletal muscle, moderate levels of expression in brain, placenta and pancreas, and weakly expressed in lung. Found in all regions of the brain examined (amygdala, caudate nucleus, corpus callosum, hippocampus and thalamus), with highest levels in amygdala.

The protein resides in the nucleus. It is found in the cytoplasm. It localises to the endoplasmic reticulum. Its function is as follows. Multifunctional protein that is involved in the regulation of many processes including tumor suppression, apoptosis, cell cycle progression or transcription. Promotes apoptosis by favouring the activation of caspase-9/CASP9 and allowing apoptosome formation. In addition, plays a role in the modulation of histone acetylation and transcription as part of the INHAT (inhibitor of histone acetyltransferases) complex. Inhibits the histone-acetyltranferase activity of EP300/CREBBP (CREB-binding protein) and EP300/CREBBP-associated factor by histone masking. Preferentially binds to unmodified histone H3 and sterically inhibiting its acetylation and phosphorylation leading to cell growth inhibition. Participates in other biochemical processes such as regulation of mRNA nuclear-to-cytoplasmic translocation and stability by its association with ELAVL1 (Hu-antigen R). Plays a role in E4F1-mediated transcriptional repression as well as inhibition of protein phosphatase 2A. In terms of biological role, (Microbial infection) Plays an essential role in influenza A, B and C viral genome replication. Mechanistically, mediates the assembly of the viral replicase asymmetric dimers composed of PB1, PB2 and PA via its N-terminal region. Also plays an essential role in foamy virus mRNA export from the nucleus. In Homo sapiens (Human), this protein is Acidic leucine-rich nuclear phosphoprotein 32 family member A (ANP32A).